Reading from the N-terminus, the 523-residue chain is MARQALDLFDEGFQELTPSEFFRKNKQMLGFTGKIRSLTIVFHELITNSFDAAEEAGILPEIKIDLKRIGKDHYILRHQDNGPGIPEKYIPKVFCTMFAGSKFRNIQSRGQQGLGCSGCVLLSQMTTGKPVKVISGTMENGELKGVKMTLKMDVKKNQGLILEKEEVEVDGTGVCIELHFKDVSYSLSEQGAYEYIRRTMIANPHARIVFNDPTGNRYVFNRASDVIPPMPKEVLPHPWGVTADDLIFMAKHTDKRRFGSMLKSNLSRMSSMKIKELEELTGIDLNKRPKDMKWEEAEQIVEAFKKMKFMSPPTSGLIPIGEEQIDKGMKEILQPEFTATVTRKPKTYRGGIAFIVEAGIAYGGNSGRLVGDQRKAEIMRFANRVPLTFDAGSCAITEGVKSLDWKRYGIRDLENAPISIFVNVVSTNVPYLSTGKQSVSPEPEILGEIRQATMIVARKLHKYLRKKKAAKEEAQRAKIFESYVPVIIKQAALLAEREEPDYRELLDTVTRRAKLEILGGITE.

ATP is bound by residues Asn48, Asp80, 101–102 (SK), 110–117 (GQQGLGCS), and Lys436.

Belongs to the TOP6B family. Homodimer. Heterotetramer of two Top6A and two Top6B chains.

It carries out the reaction ATP-dependent breakage, passage and rejoining of double-stranded DNA.. In terms of biological role, relaxes both positive and negative superturns and exhibits a strong decatenase activity. This chain is Type 2 DNA topoisomerase 6 subunit B, found in Methanothermobacter thermautotrophicus (strain ATCC 29096 / DSM 1053 / JCM 10044 / NBRC 100330 / Delta H) (Methanobacterium thermoautotrophicum).